We begin with the raw amino-acid sequence, 198 residues long: Probable chemoreceptor glutamine deamidase CheD (198 aa).

Belongs to the CheD family.

The enzyme catalyses L-glutaminyl-[protein] + H2O = L-glutamyl-[protein] + NH4(+). Its function is as follows. Probably deamidates glutamine residues to glutamate on methyl-accepting chemotaxis receptors (MCPs), playing an important role in chemotaxis. The chain is Probable chemoreceptor glutamine deamidase CheD from Xanthomonas euvesicatoria pv. vesicatoria (strain 85-10) (Xanthomonas campestris pv. vesicatoria).